Here is a 644-residue protein sequence, read N- to C-terminus: Protein lin-9 (644 aa).

Residues 1–77 (MSSAVRSPRK…GRDSPSVNSL (77 aa)) form a disordered region. Residues 50–62 (SIKRTGSPKKSPA) show a composition bias toward basic residues.

Belongs to the lin-9 family. As to quaternary structure, component of the DRM complex, at least composed of lin-9, lin-35, lin-37, lin-52, lin-53, lin-54- dpl-1 and efl-1. Interacts with zft-11; the interaction is required to suppress the activation of non-neuronal genes in neurons.

It localises to the nucleus. Synthetic multivulva class B (synMuvB) protein. SynMuvB proteins are required to repress the induction of vulval development by Ras signaling and probably act by forming the multiprotein DRM complex that represses transcription. Required for the development of sheath cells in the hermaphrodite gonad and for the development of the male spicule, rays and gonad. In association with the zinc finger protein ztf-11, negatively regulates the expression of non-neuronal genes during neurogenesis. In Caenorhabditis elegans, this protein is Protein lin-9.